The following is a 269-amino-acid chain: MPLSNNVIGCINFITVLLSIPVIGAGIWLAIGTVNSCVKLLQWPVIILGVLILLVGLAGFIGGFWRITWLLVVYLIAMLILIVLLGCLVGFIYMVTIRGSGHPEPSRAYLEYSLQDFSGWLRRRVQRSYKWERIRTCLSTTTICPELNQRYTLAQDFFNAHLDPIQSGCCKPPTKCGFTFVNPTYWISPIDMSADMDCLNWSNDQNTLCYTCDSCKAGLLANIKVDWLKADIFLLLALIGLIIVYIIGCCAFRNAETEDIFRKYKQGYT.

Over 1 to 10 (MPLSNNVIGC) the chain is Cytoplasmic. Residues 11 to 31 (INFITVLLSIPVIGAGIWLAI) traverse the membrane as a helical segment. At 32-44 (GTVNSCVKLLQWP) the chain is on the extracellular side. The chain crosses the membrane as a helical span at residues 45–65 (VIILGVLILLVGLAGFIGGFW). The Cytoplasmic segment spans residues 66–71 (RITWLL). A helical membrane pass occupies residues 72-92 (VVYLIAMLILIVLLGCLVGFI). Residues 93–231 (YMVTIRGSGH…NIKVDWLKAD (139 aa)) lie on the Extracellular side of the membrane. Asn-200 carries N-linked (GlcNAc...) asparagine glycosylation. Residues 232 to 252 (IFLLLALIGLIIVYIIGCCAF) traverse the membrane as a helical segment. The Cytoplasmic portion of the chain corresponds to 253–269 (RNAETEDIFRKYKQGYT).

This sequence belongs to the tetraspanin (TM4SF) family. As to expression, expressed in seedlings, roots, leaves, stems, apex, siliques and flowers. Present in ovules, prominently in nucellus and integuments.

The protein resides in the membrane. Involved in the basipetal transport of auxin (IAA) that modulates growth and organs organization, as well as cell differentiation. Regulates shoot apical meristem (SAM) organization in the peripheral zone. Required for initial meristematic divisions in the epidermal/lateral root cap leading to the formation of epidermal cells and a clone of lateral root cap cells, as well as for the maintenance of the radial pattern of cell specification in the root, thus regulating the distinction between the lateral root cap and epidermis. Together with WIH peptides, promotes megasporogenesis. The chain is Protein TORNADO 2 (TRN2) from Arabidopsis thaliana (Mouse-ear cress).